The following is a 226-amino-acid chain: Xanthocillin biosynthesis cluster protein F (226 aa).

It participates in secondary metabolite biosynthesis. Its function is as follows. Part of the gene cluster that mediates the biosynthesis of the isocyanide xanthocillin and its derivatives. The first step of the pathway consists in the conversion of tyrosine into a vinyl-isonitrile intermediate by the isocyanide synthase xanB. Subsequent oxidative dimerization of this intermediate to form xanthocillin may involve the cytochrome P450 monooxygenase xanG, whose expression is coregulated with that of XanB. Xanthocillin can be further modified by the isonitrile hydratase-like protein xanA which introduces N-formyl groups and the methyltransferase xanE which introduces methyl groups, leading to the production of several derivatives including fumiformamide. Finally, fumiformamide can be subject to both oxidative and reductive cyclization to yield melanocins E and F, respectively. The sequence is that of Xanthocillin biosynthesis cluster protein F from Aspergillus fumigatus (strain ATCC MYA-4609 / CBS 101355 / FGSC A1100 / Af293) (Neosartorya fumigata).